A 371-amino-acid polypeptide reads, in one-letter code: Antibiotic efflux pump periplasmic linker protein ArpA (371 aa).

A signal peptide spans 1-22 (MQFKPAVTALVSAVALATLLSG). Cysteine 23 is lipidated: N-palmitoyl cysteine. A lipid anchor (S-diacylglycerol cysteine) is attached at cysteine 23. Residues 115–155 (LAERYKQLIDEQAVSKQEYDDANAKRLQAEASLKSAQIDLR) are a coiled coil.

Belongs to the membrane fusion protein (MFP) (TC 8.A.1) family.

It localises to the cell inner membrane. The periplasmic linker protein component of an antibiotic efflux pump. Confers resistance to numerous structurally unrelated antibiotics such as carbenicillin, chloramphenicol, erythromycin, novobiocin, streptomycin and tetracycline. Is not involved in organic solvent efflux. This Pseudomonas putida (Arthrobacter siderocapsulatus) protein is Antibiotic efflux pump periplasmic linker protein ArpA (arpA).